The following is a 273-amino-acid chain: Ribosomal RNA small subunit methyltransferase A (273 aa).

Residues Asn-18, Leu-20, Gly-45, Glu-66, Asp-91, and Asn-113 each coordinate S-adenosyl-L-methionine.

The protein belongs to the class I-like SAM-binding methyltransferase superfamily. rRNA adenine N(6)-methyltransferase family. RsmA subfamily.

The protein resides in the cytoplasm. The enzyme catalyses adenosine(1518)/adenosine(1519) in 16S rRNA + 4 S-adenosyl-L-methionine = N(6)-dimethyladenosine(1518)/N(6)-dimethyladenosine(1519) in 16S rRNA + 4 S-adenosyl-L-homocysteine + 4 H(+). Its function is as follows. Specifically dimethylates two adjacent adenosines (A1518 and A1519) in the loop of a conserved hairpin near the 3'-end of 16S rRNA in the 30S particle. May play a critical role in biogenesis of 30S subunits. The chain is Ribosomal RNA small subunit methyltransferase A from Cronobacter sakazakii (strain ATCC BAA-894) (Enterobacter sakazakii).